The following is a 322-amino-acid chain: Transaldolase (322 aa).

Lys-132 serves as the catalytic Schiff-base intermediate with substrate.

This sequence belongs to the transaldolase family. Type 1 subfamily. In terms of assembly, homodimer.

The protein localises to the cytoplasm. It carries out the reaction D-sedoheptulose 7-phosphate + D-glyceraldehyde 3-phosphate = D-erythrose 4-phosphate + beta-D-fructose 6-phosphate. The protein operates within carbohydrate degradation; pentose phosphate pathway; D-glyceraldehyde 3-phosphate and beta-D-fructose 6-phosphate from D-ribose 5-phosphate and D-xylulose 5-phosphate (non-oxidative stage): step 2/3. Its function is as follows. Transaldolase is important for the balance of metabolites in the pentose-phosphate pathway. The sequence is that of Transaldolase from Protochlamydia amoebophila (strain UWE25).